We begin with the raw amino-acid sequence, 350 residues long: D-guloside 3-dehydrogenase (350 aa).

This sequence belongs to the zinc-containing alcohol dehydrogenase family. It depends on Zn(2+) as a cofactor.

It carries out the reaction a D-guloside + NAD(+) = a 3-dehydro-D-guloside + NADH + H(+). In terms of biological role, catalyzes the NAD(+)-dependent oxidation of the hydroxyl group at C3 of D-gulosides leading to 3-dehydro-D-gulosides. Probably functions in a metabolic pathway that transforms D-gulosides to D-glucosides. Is also able to catalyze the reverse reactions, i.e. the NADH-dependent reduction of the oxo group at C3 of 3-dehydro-D-gulosides leading to D-gulosides. In vitro, can oxidize D-gulose and methyl beta-D-guloside, and reduce methyl alpha-3-dehydro-D-guloside and methyl beta-3-dehydro-D-guloside. However, the actual specific physiological substrates for this metabolic pathway are unknown. This Escherichia coli (strain K12) protein is D-guloside 3-dehydrogenase (ycjQ).